Consider the following 939-residue polypeptide: Intimin (939 aa).

The first 41 residues, 1–41 (MITHGFYARTRHKHKLKKTFIMLSAGLGLFFYVNQNSFANG), serve as a signal peptide directing secretion. The peptidoglycan-binding stretch occupies residues 40–153 (NGENYFKLGS…KLTKMSPDVT (114 aa)). Residues 40-153 (NGENYFKLGS…KLTKMSPDVT (114 aa)) are sufficient for homodimerization. The tract at residues 40-212 (NGENYFKLGS…LQAWLQHYGT (173 aa)) is required for periplasmic localization. The LysM domain maps to 63 to 112 (LFYTLKTGETVADLSKSQDINLSTIWSLNKHLYSSESEMMKAAPGQQIIL). The tract at residues 189–430 (DTALGIAGNQ…PQYVNELRTL (242 aa)) is inverse autotransporter. Residues 402–411 (LYSMQFRYQF) are signature sequence for beta-barrel assembly machinery (BAM), which recognizes the unfolded beta-barrel in the periplasm. 2 consecutive Big-1 domains span residues 560-653 (VTDF…VIFV) and 660-751 (ITEI…VEFF). The tract at residues 750–939 (FFTTLTIDDG…ESNAYATCVK (190 aa)) is required and sufficient for interaction with intimin receptor Tir. The segment at 842–939 (LIVPNMSKRV…ESNAYATCVK (98 aa)) is C-type lectin domain. Residues 842–939 (LIVPNMSKRV…ESNAYATCVK (98 aa)) form an intimin receptor Tir-binding region. An intrachain disulfide couples cysteine 860 to cysteine 937.

Belongs to the intimin/invasin family. Homodimer. Interacts with Tir.

It localises to the cell outer membrane. Functionally, an inverse autotransporter. Adhesin, which mediates attachment to the human intestine epithelial cells. Necessary for the production of attaching and effacing lesions on infected human tissue culture cells. Anchored to the outer membrane by binding to peptidoglycan (PGN) via its periplasmic domain, thus helping in receptor interactions during host invasion. PGN-binding may also aid in resisting mechanical and chemical stress during transit of the bacterium through the gastrointestinal tract of the host. Periplasmic domain binds purified E.coli PGN sacculi under acidic conditions in vitro and in vivo, but does not bind to chitin. Periplasmic domain binds PGN sacculi with an apparent dissociation constant (Kd) of 0.8 uM. No binding to PGN in vitro at normal physiological pH 7.4. In Escherichia coli O127:H6 (strain E2348/69 / EPEC), this protein is Intimin.